A 414-amino-acid polypeptide reads, in one-letter code: Protein phosphatase 2C homolog 3 (414 aa).

One can recognise a PPM-type phosphatase domain in the interval 23 to 288 (LYGLSSMQGW…DNMTVCIVAL (266 aa)). The Mn(2+) site is built by aspartate 62, glycine 63, aspartate 230, and aspartate 279. Disordered stretches follow at residues 313 to 368 (APPE…TNGS) and 380 to 414 (FPHKAEEENSSSETDIVNSNKDVADDHKEAVSAAD). A compositionally biased stretch (basic and acidic residues) spans 350–363 (GYDKDANENSKEDD). A compositionally biased stretch (polar residues) spans 390–400 (SSETDIVNSNK). Basic and acidic residues predominate over residues 401–414 (DVADDHKEAVSAAD).

Belongs to the PP2C family. In terms of assembly, monomer. Mg(2+) serves as cofactor. Mn(2+) is required as a cofactor.

The protein localises to the cytoplasm. It is found in the nucleus. The catalysed reaction is O-phospho-L-seryl-[protein] + H2O = L-seryl-[protein] + phosphate. It carries out the reaction O-phospho-L-threonyl-[protein] + H2O = L-threonyl-[protein] + phosphate. Functionally, dephosphorylating regulator for many key proteins. Has an important role in osmotic stability and cell shape control. It may negatively regulate the osmosensing signal transmitted through wis1 map kinase. The sequence is that of Protein phosphatase 2C homolog 3 (ptc3) from Schizosaccharomyces pombe (strain 972 / ATCC 24843) (Fission yeast).